A 101-amino-acid polypeptide reads, in one-letter code: MGTRFLLALCLVLLVLGFEVQGAQLPQQDERPSPALLSQVQESLSSYWESAKAAAQKLYEKTYLPAVDEKLRDLYSKSTAAMSTYTGIFTDQVLSVLKGEE.

The first 22 residues, 1 to 22, serve as a signal peptide directing secretion; that stretch reads MGTRFLLALCLVLLVLGFEVQG. Positions 23–28 are cleaved as a propeptide — removed in mature form; sequence AQLPQQ. Residues 66–74 are lipid binding; it reads AVDEKLRDL. A lipoprotein lipase cofactor region spans residues 78 to 101; sequence STAAMSTYTGIFTDQVLSVLKGEE.

It belongs to the apolipoprotein C2 family. In terms of processing, proapolipoprotein C-II is synthesized as a sialic acid containing glycoprotein which is subsequently desialylated prior to its proteolytic processing. Post-translationally, proapolipoprotein C-II, the major form found in plasma undergoes proteolytic cleavage of its N-terminal hexapeptide to generate apolipoprotein C-II, which occurs as the minor form in plasma.

It is found in the secreted. Component of chylomicrons, very low-density lipoproteins (VLDL), low-density lipoproteins (LDL), and high-density lipoproteins (HDL) in plasma. Plays an important role in lipoprotein metabolism as an activator of lipoprotein lipase. Both proapolipoprotein C-II and apolipoprotein C-II can activate lipoprotein lipase. This is Apolipoprotein C-II (APOC2) from Papio anubis (Olive baboon).